The primary structure comprises 282 residues: uncharacterized protein (282 aa).

This sequence to M.tuberculosis Rv2161c and Rv3079c.

This is an uncharacterized protein from Mycobacterium tuberculosis (strain CDC 1551 / Oshkosh).